The sequence spans 96 residues: MSAVTVNDDGLVLRLYIQPKASRDSIVGLHGDEVKVAITAPPVDGQANSHLVKFLGKQFRVAKSQVVIEKGELGRHKQIKIINPQQIPPEIAALIN.

Belongs to the UPF0235 family.

This chain is UPF0235 protein YggU, found in Shigella flexneri.